Consider the following 490-residue polypeptide: Cytochrome P450 2C55 (490 aa).

C435 is a binding site for heme.

Belongs to the cytochrome P450 family. Heme serves as cofactor. As to expression, highest level in colon. Low levels in liver and small intestine.

It localises to the endoplasmic reticulum membrane. It is found in the microsome membrane. The enzyme catalyses an organic molecule + reduced [NADPH--hemoprotein reductase] + O2 = an alcohol + oxidized [NADPH--hemoprotein reductase] + H2O + H(+). Metabolizes arachidonic acid mainly to 19-hydroxyeicosatetraenoic acid (HETE). The polypeptide is Cytochrome P450 2C55 (Mus musculus (Mouse)).